The sequence spans 430 residues: Serine--tRNA ligase (430 aa).

234-236 (TAE) is an L-serine binding site. An ATP-binding site is contributed by 265–267 (RRE). Glu-288 provides a ligand contact to L-serine. 352–355 (EISS) serves as a coordination point for ATP. Residue Ser-388 participates in L-serine binding.

The protein belongs to the class-II aminoacyl-tRNA synthetase family. Type-1 seryl-tRNA synthetase subfamily. Homodimer. The tRNA molecule binds across the dimer.

It localises to the cytoplasm. It carries out the reaction tRNA(Ser) + L-serine + ATP = L-seryl-tRNA(Ser) + AMP + diphosphate + H(+). The enzyme catalyses tRNA(Sec) + L-serine + ATP = L-seryl-tRNA(Sec) + AMP + diphosphate + H(+). It functions in the pathway aminoacyl-tRNA biosynthesis; selenocysteinyl-tRNA(Sec) biosynthesis; L-seryl-tRNA(Sec) from L-serine and tRNA(Sec): step 1/1. In terms of biological role, catalyzes the attachment of serine to tRNA(Ser). Is also able to aminoacylate tRNA(Sec) with serine, to form the misacylated tRNA L-seryl-tRNA(Sec), which will be further converted into selenocysteinyl-tRNA(Sec). The sequence is that of Serine--tRNA ligase from Thermosynechococcus vestitus (strain NIES-2133 / IAM M-273 / BP-1).